Consider the following 295-residue polypeptide: Phosphoenolpyruvate phosphomutase (295 aa).

Asp58 (nucleophile) is an active-site residue. Asp58 contributes to the Mg(2+) binding site.

It belongs to the isocitrate lyase/PEP mutase superfamily. PEP mutase family. In terms of assembly, homotetramer. Mg(2+) serves as cofactor.

It catalyses the reaction phosphoenolpyruvate + H(+) = 3-phosphonopyruvate. The protein operates within phosphorus metabolism; phosphonate biosynthesis. Functionally, formation of a carbon-phosphorus bond by converting phosphoenolpyruvate (PEP) to phosphonopyruvate (P-Pyr). The polypeptide is Phosphoenolpyruvate phosphomutase (Mytilus edulis (Blue mussel)).